Here is a 443-residue protein sequence, read N- to C-terminus: Tol-Pal system protein TolB (443 aa).

Residues Met-1 to Ala-33 form the signal peptide.

This sequence belongs to the TolB family. The Tol-Pal system is composed of five core proteins: the inner membrane proteins TolA, TolQ and TolR, the periplasmic protein TolB and the outer membrane protein Pal. They form a network linking the inner and outer membranes and the peptidoglycan layer.

It is found in the periplasm. In terms of biological role, part of the Tol-Pal system, which plays a role in outer membrane invagination during cell division and is important for maintaining outer membrane integrity. The sequence is that of Tol-Pal system protein TolB from Brucella suis biovar 1 (strain 1330).